Consider the following 294-residue polypeptide: Glycine--tRNA ligase alpha subunit (294 aa).

This sequence belongs to the class-II aminoacyl-tRNA synthetase family. In terms of assembly, tetramer of two alpha and two beta subunits.

Its subcellular location is the cytoplasm. It catalyses the reaction tRNA(Gly) + glycine + ATP = glycyl-tRNA(Gly) + AMP + diphosphate. The chain is Glycine--tRNA ligase alpha subunit from Oleidesulfovibrio alaskensis (strain ATCC BAA-1058 / DSM 17464 / G20) (Desulfovibrio alaskensis).